A 284-amino-acid polypeptide reads, in one-letter code: Proteasome subunit beta 1 (284 aa).

Residues 1 to 56 constitute a propeptide, removed in mature form; by autocatalysis; that stretch reads MASHDSYTGRLPGAFMNPGTSSFTEFLASYNPDLLPGRHMTALAGGMPGNVEAPHA. Threonine 57 functions as the Nucleophile in the catalytic mechanism.

It belongs to the peptidase T1B family. As to quaternary structure, the 20S proteasome core is composed of 14 alpha and 14 beta subunits that assemble into four stacked heptameric rings, resulting in a barrel-shaped structure. The two inner rings, each composed of seven catalytic beta subunits, are sandwiched by two outer rings, each composed of seven alpha subunits. The catalytic chamber with the active sites is on the inside of the barrel. Has a gated structure, the ends of the cylinder being occluded by the N-termini of the alpha-subunits. Is capped by the proteasome-associated ATPase, ARC.

It is found in the cytoplasm. It carries out the reaction Cleavage of peptide bonds with very broad specificity.. Its pathway is protein degradation; proteasomal Pup-dependent pathway. Its activity is regulated as follows. The formation of the proteasomal ATPase ARC-20S proteasome complex, likely via the docking of the C-termini of ARC into the intersubunit pockets in the alpha-rings, may trigger opening of the gate for substrate entry. Interconversion between the open-gate and close-gate conformations leads to a dynamic regulation of the 20S proteasome proteolysis activity. In terms of biological role, component of the proteasome core, a large protease complex with broad specificity involved in protein degradation. The chain is Proteasome subunit beta 1 from Thermomonospora curvata (strain ATCC 19995 / DSM 43183 / JCM 3096 / KCTC 9072 / NBRC 15933 / NCIMB 10081 / Henssen B9).